The sequence spans 218 residues: uncharacterized protein (218 aa).

Transmembrane regions (helical) follow at residues Leu-8–Gly-28 and Ile-158–Ile-178.

It localises to the cell membrane. This is an uncharacterized protein from Mycoplasma genitalium (strain ATCC 33530 / DSM 19775 / NCTC 10195 / G37) (Mycoplasmoides genitalium).